A 216-amino-acid polypeptide reads, in one-letter code: Thiopurine S-methyltransferase (216 aa).

Residues Trp-11, Leu-46, Glu-67, and Arg-122 each contribute to the S-adenosyl-L-methionine site.

This sequence belongs to the class I-like SAM-binding methyltransferase superfamily. TPMT family.

It localises to the cytoplasm. It catalyses the reaction S-adenosyl-L-methionine + a thiopurine = S-adenosyl-L-homocysteine + a thiopurine S-methylether.. This chain is Thiopurine S-methyltransferase, found in Vibrio parahaemolyticus serotype O3:K6 (strain RIMD 2210633).